Reading from the N-terminus, the 634-residue chain is MGLLDGISHLTDLRALTPDQLDELAAELRDLIVSTVSRTGGHLAPNLGVVELTLALHYVFRAPDDRIVWDVGHQCYVHKILTGRKSQFHTLRQFEGLSGFPNRNESEYDCFGTGHSSTSISAALGMALARDLSGEDRNVVAVIGDGALSGGMAFEALNQAGHLGCRLIVVLNDNEMSIARNVGAMARYLSRLRTDPMYSRSKDEVESLLRRIPAIGPRVLGWIERIKDSLKYLVVAGMLFEELGFTYLGPIDGHNIPAMLNVFRQAQAVEGPVLVHVLTKKGKGYAPAEKNPDKFHGVGPFDPATGNTPTDARVSFTEVFGRTLVQLAEADSRILAITAAMTSGTGLGPFSRRFPQRFFDVGIAEQHAVTLAAGLAVEGYRPVVAIYSTFLQRAYDQVLHDVCLQKLPVVFALDRGGIVGEDGVTHQGVFDFSFLRPVPNLVMMAPKDENEFQHMLKTAVEHEGPIAVRYPRGTGTGCALDQDLVALPIGRAEVLREGDDITLIAIGNMVPTAVKAAEILAERGIEASVVNARFVKPLDEKCICHYARRTGRLITLEENVIAGGFGSAVQELLVAKGLTDVRVQLIGLPDVFIEHGAPHLLRAKYGLTVDRVVRTAESEKRKRARLKLAPRLLR.

Thiamine diphosphate is bound by residues His73 and 114-116 (GHS). Residue Asp145 coordinates Mg(2+). Thiamine diphosphate contacts are provided by residues 146–147 (GA), Asn174, Tyr285, and Glu365. Residue Asn174 coordinates Mg(2+).

It belongs to the transketolase family. DXPS subfamily. As to quaternary structure, homodimer. Mg(2+) is required as a cofactor. It depends on thiamine diphosphate as a cofactor.

It carries out the reaction D-glyceraldehyde 3-phosphate + pyruvate + H(+) = 1-deoxy-D-xylulose 5-phosphate + CO2. It participates in metabolic intermediate biosynthesis; 1-deoxy-D-xylulose 5-phosphate biosynthesis; 1-deoxy-D-xylulose 5-phosphate from D-glyceraldehyde 3-phosphate and pyruvate: step 1/1. Its function is as follows. Catalyzes the acyloin condensation reaction between C atoms 2 and 3 of pyruvate and glyceraldehyde 3-phosphate to yield 1-deoxy-D-xylulose-5-phosphate (DXP). The chain is 1-deoxy-D-xylulose-5-phosphate synthase from Desulforudis audaxviator (strain MP104C).